We begin with the raw amino-acid sequence, 538 residues long: Putative outer membrane porin BglH (538 aa).

An N-terminal signal peptide occupies residues 1-25; that stretch reads MFRRNLITSAILLMAPLAFSAQSLA. Residues 52 to 82 form a disordered region; it reads KDEEKKKYTPATVNRSVSTNDQGYAANPFPT. Polar residues predominate over residues 62–73; sequence ATVNRSVSTNDQ.

The protein belongs to the porin LamB (TC 1.B.3) family.

The protein localises to the cell outer membrane. Its function is as follows. May be a sugar porin with a broad carbohydrate specificity. This chain is Putative outer membrane porin BglH (bglH), found in Escherichia coli O139:H28 (strain E24377A / ETEC).